The following is a 488-amino-acid chain: Glutamyl-tRNA(Gln) amidotransferase subunit A (488 aa).

Residues lysine 77 and serine 152 each act as charge relay system in the active site. Serine 176 functions as the Acyl-ester intermediate in the catalytic mechanism.

It belongs to the amidase family. GatA subfamily. Heterotrimer of A, B and C subunits.

It carries out the reaction L-glutamyl-tRNA(Gln) + L-glutamine + ATP + H2O = L-glutaminyl-tRNA(Gln) + L-glutamate + ADP + phosphate + H(+). Its function is as follows. Allows the formation of correctly charged Gln-tRNA(Gln) through the transamidation of misacylated Glu-tRNA(Gln) in organisms which lack glutaminyl-tRNA synthetase. The reaction takes place in the presence of glutamine and ATP through an activated gamma-phospho-Glu-tRNA(Gln). The sequence is that of Glutamyl-tRNA(Gln) amidotransferase subunit A from Streptococcus equi subsp. zooepidemicus (strain H70).